A 189-amino-acid chain; its full sequence is MVKVIASSVRKGNVLDVDGKLYVVLTAANFHPGKGTPVTQVDMRRIVDGVKVSERWRTTEQVERAFVEDVNFQYLYEDGEGFHFMNPVSYDQVVVDVETMGDQKAFLQEGMTCVLSMHEGIALALQLPRHVTLEIAETEPVVKGQTASSSYKPAILSNGVRTLVPPHINAGTRVVIATEDVSYVERAKD.

The protein belongs to the elongation factor P family.

It is found in the cytoplasm. Its pathway is protein biosynthesis; polypeptide chain elongation. Functionally, involved in peptide bond synthesis. Stimulates efficient translation and peptide-bond synthesis on native or reconstituted 70S ribosomes in vitro. Probably functions indirectly by altering the affinity of the ribosome for aminoacyl-tRNA, thus increasing their reactivity as acceptors for peptidyl transferase. This is Elongation factor P from Rhizobium rhizogenes (strain K84 / ATCC BAA-868) (Agrobacterium radiobacter).